Reading from the N-terminus, the 185-residue chain is GTP-dependent dephospho-CoA kinase (185 aa).

Residues Asp50, Val52, Asp73, Lys75, and Glu128 each coordinate GTP.

The protein belongs to the GTP-dependent DPCK family.

The catalysed reaction is 3'-dephospho-CoA + GTP = GDP + CoA + H(+). The protein operates within cofactor biosynthesis; coenzyme A biosynthesis. In terms of biological role, catalyzes the GTP-dependent phosphorylation of the 3'-hydroxyl group of dephosphocoenzyme A to form coenzyme A (CoA). This Aeropyrum pernix (strain ATCC 700893 / DSM 11879 / JCM 9820 / NBRC 100138 / K1) protein is GTP-dependent dephospho-CoA kinase.